The chain runs to 369 residues: L-lactate oxidase (369 aa).

One can recognise an FMN hydroxy acid dehydrogenase domain in the interval 13–369 (EKKLNVLNLD…KNAKLLNIRY (357 aa)). Tyr39 lines the pyruvate pocket. FMN-binding positions include 92–94 (PAA), Ser121, and Gln143. Tyr145 serves as a coordination point for pyruvate. Thr171 lines the FMN pocket. Arg180 is a pyruvate binding site. Lys240 and Ser262 together coordinate FMN. Residues His264 and Arg267 each coordinate pyruvate. His264 functions as the Proton acceptor in the catalytic mechanism. FMN is bound by residues 295 to 299 (DSGIR) and Arg319.

It belongs to the FMN-dependent alpha-hydroxy acid dehydrogenase family. Homotetramer. FMN is required as a cofactor.

The enzyme catalyses (S)-lactate + O2 = pyruvate + H2O2. Functionally, catalyzes the oxidation of (S)-lactate (L-lactate) to pyruvate, with a reduction of O2 to H2O2. May be involved in the utilization of L-lactate as an energy source for growth. The chain is L-lactate oxidase from Lentilactobacillus hilgardii (strain ATCC 8290 / DSM 20176 / CCUG 30140 / JCM 1155 / KCTC 3500 / NBRC 15886 / NCIMB 8040 / NRRL B-1843 / 9).